Consider the following 318-residue polypeptide: 2-oxoacid:ferredoxin oxidoreductase 1, subunit beta (318 aa).

[4Fe-4S] cluster contacts are provided by C18, C21, and C52. Thiamine diphosphate is bound by residues 50–53 and H69; that span reads IGCS. D94 is a Mg(2+) binding site. 95-96 is a thiamine diphosphate binding site; it reads GD. The Mg(2+) site is built by N122 and V124. 126–127 provides a ligand contact to thiamine diphosphate; sequence GL. C201 is a binding site for [4Fe-4S] cluster.

In terms of assembly, heterodimer composed of an alpha and a beta subunit. Requires [4Fe-4S] cluster as cofactor. It depends on thiamine diphosphate as a cofactor. Mg(2+) is required as a cofactor.

The enzyme catalyses a 2-oxocarboxylate + 2 oxidized [2Fe-2S]-[ferredoxin] + CoA = an acyl-CoA + 2 reduced [2Fe-2S]-[ferredoxin] + CO2 + H(+). In terms of biological role, catalyzes the coenzyme A-dependent oxidative decarboxylation of different 2-oxoacids such as pyruvate, 2-oxobutyrate and glyoxylate to form their CoA derivatives. The polypeptide is 2-oxoacid:ferredoxin oxidoreductase 1, subunit beta (Aeropyrum pernix (strain ATCC 700893 / DSM 11879 / JCM 9820 / NBRC 100138 / K1)).